The sequence spans 255 residues: MLNVSGLWAEYQGKPALQDVSLQIASGQLVVVLGPSGCGKTTLLNLIAGFMTPSAGVITLDNIPVSGPSAERGVVFQNEGLLPWRDVVSNVEFGLQLAGMSKEQRRVTALKMLNRVGLAGFEHHFIWQLSGGMRQRVGIARALAVDPRLLLLDEPFGALDAFTREQMQELLLTIWRDTGKQILLITHDIEEAVFLASELLLLSPGPGQVVERLSLNFGQRYAEGEPCRAIKSDPEFIARREDVLGKVFQQREVLI.

The 228-residue stretch at 2–229 (LNVSGLWAEY…RYAEGEPCRA (228 aa)) folds into the ABC transporter domain. Residue 34–41 (GPSGCGKT) coordinates ATP.

This sequence belongs to the ABC transporter superfamily. Taurine importer (TC 3.A.1.17.1) family. In terms of assembly, the complex is composed of two ATP-binding proteins (TauB), two transmembrane proteins (TauC) and a solute-binding protein (TauA).

The protein localises to the cell inner membrane. It carries out the reaction taurine(out) + ATP + H2O = taurine(in) + ADP + phosphate + H(+). Part of the ABC transporter complex TauABC involved in taurine import. Responsible for energy coupling to the transport system. The sequence is that of Taurine import ATP-binding protein TauB from Yersinia pestis bv. Antiqua (strain Antiqua).